The primary structure comprises 91 residues: Large ribosomal subunit protein bL27 (91 aa).

This sequence belongs to the bacterial ribosomal protein bL27 family.

The sequence is that of Large ribosomal subunit protein bL27 from Chromobacterium violaceum (strain ATCC 12472 / DSM 30191 / JCM 1249 / CCUG 213 / NBRC 12614 / NCIMB 9131 / NCTC 9757 / MK).